The primary structure comprises 60 residues: Large ribosomal subunit protein bL32 (60 aa).

The interval 1–60 (MAVQQVKKSRSKRDMRRSHDSLTGPTLSTDKSTGELHLRHHVSPNGFYKGKKVVDTKSED) is disordered. Over residues 7-16 (KKSRSKRDMR) the composition is skewed to basic residues.

The protein belongs to the bacterial ribosomal protein bL32 family.

The chain is Large ribosomal subunit protein bL32 from Francisella philomiragia subsp. philomiragia (strain ATCC 25017 / CCUG 19701 / FSC 153 / O#319-036).